The sequence spans 170 residues: UPF0220 protein C8D2.02c (170 aa).

4 consecutive transmembrane segments (helical) span residues 23 to 43 (LGVY…VDAA), 54 to 74 (LHIT…IVIV), 101 to 121 (ILFI…TVFI), and 136 to 156 (MGSA…ALWI).

The protein belongs to the UPF0220 family.

The protein resides in the membrane. This is UPF0220 protein C8D2.02c from Schizosaccharomyces pombe (strain 972 / ATCC 24843) (Fission yeast).